Reading from the N-terminus, the 394-residue chain is Phosphoglycerate kinase (394 aa).

Substrate is bound by residues 21 to 23 (DFN), Arg36, 59 to 62 (HLGR), Arg118, and Arg151. Phosphoserine is present on Ser183. ATP contacts are provided by Lys201 and Gly292. Thr299 is subject to Phosphothreonine. ATP-binding positions include Glu323 and 350-353 (GGDS).

This sequence belongs to the phosphoglycerate kinase family. As to quaternary structure, monomer.

The protein resides in the cytoplasm. The catalysed reaction is (2R)-3-phosphoglycerate + ATP = (2R)-3-phospho-glyceroyl phosphate + ADP. The protein operates within carbohydrate degradation; glycolysis; pyruvate from D-glyceraldehyde 3-phosphate: step 2/5. The protein is Phosphoglycerate kinase (pgk) of Priestia megaterium (strain DSM 319 / IMG 1521) (Bacillus megaterium).